A 337-amino-acid chain; its full sequence is 1-aminocyclopropane-1-carboxylate deaminase (337 aa).

At K50 the chain carries N6-(pyridoxal phosphate)lysine. S77 (nucleophile) is an active-site residue.

It belongs to the ACC deaminase/D-cysteine desulfhydrase family. Homotrimer. The cofactor is pyridoxal 5'-phosphate.

The catalysed reaction is 1-aminocyclopropane-1-carboxylate + H2O = 2-oxobutanoate + NH4(+). In terms of biological role, catalyzes a cyclopropane ring-opening reaction, the irreversible conversion of 1-aminocyclopropane-1-carboxylate (ACC) to ammonia and alpha-ketobutyrate. Allows growth on ACC as a nitrogen source. This is 1-aminocyclopropane-1-carboxylate deaminase from Methylobacterium sp. (strain 4-46).